A 220-amino-acid polypeptide reads, in one-letter code: Ribosomal RNA small subunit methyltransferase G (220 aa).

S-adenosyl-L-methionine is bound by residues G78, F83, 129–130 (GE), and R146.

This sequence belongs to the methyltransferase superfamily. RNA methyltransferase RsmG family.

Its subcellular location is the cytoplasm. It carries out the reaction guanosine(527) in 16S rRNA + S-adenosyl-L-methionine = N(7)-methylguanosine(527) in 16S rRNA + S-adenosyl-L-homocysteine. Its function is as follows. Specifically methylates the N7 position of guanine in position 527 of 16S rRNA. The chain is Ribosomal RNA small subunit methyltransferase G from Geobacter metallireducens (strain ATCC 53774 / DSM 7210 / GS-15).